The primary structure comprises 447 residues: Omega-6 fatty acid desaturase, chloroplastic (447 aa).

The N-terminal 65 residues, 1–65 (MESAITISNH…TRRKSTLVQA (65 aa)), are a transit peptide targeting the chloroplast. Position 66 is an N-acetylvaline (Val-66). The Histidine box-1 motif lies at 171 to 175 (HDCAH). Residues 207–211 (HDQHH) carry the Histidine box-2 motif. The short motif at 367-371 (HIPHH) is the Histidine box-3 element.

It belongs to the fatty acid desaturase type 1 family.

Its subcellular location is the plastid. The protein localises to the chloroplast membrane. It catalyses the reaction a (9Z)-octadecenoyl-containing glycerolipid + 2 reduced [2Fe-2S]-[ferredoxin] + O2 + 2 H(+) = a (9Z,12Z)-octadecadienoyl-containing glycerolipid + 2 oxidized [2Fe-2S]-[ferredoxin] + 2 H2O. Its pathway is lipid metabolism; polyunsaturated fatty acid biosynthesis. In terms of biological role, chloroplast omega-6 fatty acid desaturase introduces the second double bond in the biosynthesis of 16:3 and 18:3 fatty acids, important constituents of plant membranes. It is thought to use ferredoxin as an electron donor and to act on fatty acids esterified to galactolipids, sulfolipids and phosphatidylglycerol. The protein is Omega-6 fatty acid desaturase, chloroplastic of Spinacia oleracea (Spinach).